Reading from the N-terminus, the 2346-residue chain is Acetyl-CoA carboxylase 1 (2346 aa).

An N-acetylmethionine modification is found at methionine 1. Phosphoserine is present on residues serine 5, serine 23, serine 25, serine 29, serine 34, serine 48, serine 50, and serine 53. Position 58 is a phosphothreonine (threonine 58). The residue at position 78 (serine 78) is a Phosphoserine. Residue serine 80 is modified to Phosphoserine; by AMPK. One can recognise a Biotin carboxylation domain in the interval 117–618 (VIEKVLIANN…DTGWLDRLIA (502 aa)). One can recognise an ATP-grasp domain in the interval 275–466 (SKRILNVPQE…LPAAQLQIAM (192 aa)). 315-320 (GGGGKG) is a binding site for ATP. Residues glutamate 424, glutamate 437, and asparagine 439 each contribute to the Mg(2+) site. 3 residues coordinate Mn(2+): glutamate 424, glutamate 437, and asparagine 439. The active site involves arginine 441. Threonine 610 is modified (phosphothreonine). A Biotinyl-binding domain is found at 745 to 819 (FEKENDPSVL…DPGCVIAKMQ (75 aa)). An N6-biotinyllysine modification is found at lysine 786. 4 positions are modified to phosphoserine: serine 835, serine 1201, serine 1216, and serine 1218. The residue at position 1227 (threonine 1227) is a Phosphothreonine. Phosphoserine occurs at positions 1259, 1263, and 1273. Position 1334 is an N6-acetyllysine (lysine 1334). The 339-residue stretch at 1576 to 1914 (PYVTKDLLQS…SVYSSVPLLN (339 aa)) folds into the CoA carboxyltransferase N-terminal domain. Residues 1576 to 2234 (PYVTKDLLQS…EDLVKKKIHN (659 aa)) form a carboxyltransferase region. Arginine 1823, lysine 2127, and arginine 2129 together coordinate CoA. A CoA carboxyltransferase C-terminal domain is found at 1918-2234 (PIDRVIEFVP…EDLVKKKIHN (317 aa)). Threonine 2153 is modified (phosphothreonine).

In terms of assembly, monomer, homodimer, and homotetramer. Can form filamentous polymers. Interacts in its inactive phosphorylated form with the BRCT domains of BRCA1 which prevents ACACA dephosphorylation and inhibits lipid synthesis. Interacts with MID1IP1; interaction with MID1IP1 promotes oligomerization and increases its activity. The cofactor is Mg(2+). Requires Mn(2+) as cofactor. Biotin serves as cofactor. In terms of processing, phosphorylation on Ser-1263 is required for interaction with BRCA1. Phosphorylation at Ser-80 by AMPK inactivates enzyme activity. Post-translationally, the biotin cofactor is covalently attached to the central biotinyl-binding domain and is required for the catalytic activity. In terms of tissue distribution, expressed at high levels in mammary gland.

It is found in the cytoplasm. Its subcellular location is the cytosol. The enzyme catalyses hydrogencarbonate + acetyl-CoA + ATP = malonyl-CoA + ADP + phosphate + H(+). Its pathway is lipid metabolism; malonyl-CoA biosynthesis; malonyl-CoA from acetyl-CoA: step 1/1. With respect to regulation, inhibited by phosphorylation. Citrate promotes oligomerization of the protein into filaments that correspond to the most active form of the carboxylase. Its function is as follows. Cytosolic enzyme that catalyzes the carboxylation of acetyl-CoA to malonyl-CoA, the first and rate-limiting step of de novo fatty acid biosynthesis. This is a 2 steps reaction starting with the ATP-dependent carboxylation of the biotin carried by the biotin carboxyl carrier (BCC) domain followed by the transfer of the carboxyl group from carboxylated biotin to acetyl-CoA. The chain is Acetyl-CoA carboxylase 1 from Ovis aries (Sheep).